Here is a 175-residue protein sequence, read N- to C-terminus: Shikimate kinase (175 aa).

11 to 16 (GAGKTT) is an ATP binding site. T15 lines the Mg(2+) pocket. The substrate site is built by D33, R57, and G79. Position 118 (R118) interacts with ATP. Substrate is bound at residue R140.

It belongs to the shikimate kinase family. In terms of assembly, monomer. Mg(2+) serves as cofactor.

It is found in the cytoplasm. The enzyme catalyses shikimate + ATP = 3-phosphoshikimate + ADP + H(+). It functions in the pathway metabolic intermediate biosynthesis; chorismate biosynthesis; chorismate from D-erythrose 4-phosphate and phosphoenolpyruvate: step 5/7. Functionally, catalyzes the specific phosphorylation of the 3-hydroxyl group of shikimic acid using ATP as a cosubstrate. This chain is Shikimate kinase, found in Phocaeicola vulgatus (strain ATCC 8482 / DSM 1447 / JCM 5826 / CCUG 4940 / NBRC 14291 / NCTC 11154) (Bacteroides vulgatus).